The chain runs to 880 residues: Zinc-responsive transcriptional regulator ZAP1 (880 aa).

Disordered stretches follow at residues M1 to A26 and N140 to K164. Over residues A17–A26 the composition is skewed to low complexity. The segment covering S147–S158 has biased composition (polar residues). 2 positions are modified to phosphoserine: S156 and S166. The interval K182–I502 is zinc-responsive domain 1 (ZRD(AD1)). Residues H207–N402 form a transcription activation domain 1 (AD1) region. Disordered regions lie at residues N436–S482 and R510–I555. Residues N442–S456 are compositionally biased toward low complexity. Over residues Q460–N474 the composition is skewed to basic residues. Residue S515 is modified to Phosphoserine. The segment covering S545–I555 has biased composition (low complexity). A C2H2-type 1 zinc finger spans residues L579–H604. Residues L579–H641 are zinc-responsive domain 2 (ZRD(AD2)). C581, C586, H599, H604, C618, C623, H636, and H641 together coordinate Zn(2+). The transcription activation domain 2 (AD2) stretch occupies residues H611–Q640. Residues L616–H641 form a C2H2-type 2; atypical zinc finger. 5 consecutive C2H2-type zinc fingers follow at residues V705–H730, Y738–H762, Y768–H790, Y796–H818, and L824–H846. Positions V705–H846 form a DNA-binding region, DNA-binding domain.

The protein resides in the nucleus. With respect to regulation, active in zinc-limited cells and repressed in replete cells. Zinc controls ZAP1 DNA binding activity. Functionally, transcription regulator controlling zinc-responsive gene expression. Binds to zinc-responsive elements (ZREs) (consensus sequence 5'-ACCYYNAAGGT-3') in the promoter of target genes. Recruits SWI/SNF, SAGA, and Mediator complexes as coactivators in a zinc-responsive manner. Involved in zinc ion homeostasis by zinc-responsive transcriptional regulation of the zinc uptake system genes ZTR1 and ZTR2. Positively regulates ETR1 expression, affecting mitochondrial function. The polypeptide is Zinc-responsive transcriptional regulator ZAP1 (ZAP1) (Saccharomyces cerevisiae (strain ATCC 204508 / S288c) (Baker's yeast)).